The primary structure comprises 79 residues: MSEIGERVKKIVVEHLGVEPEKVVDAASFIDDLGADSLDTVELVMAFEEEFGCEIPDDAAETILTVGDAVKFLEKNAKS.

The region spanning 2–77 (SEIGERVKKI…DAVKFLEKNA (76 aa)) is the Carrier domain. At Ser-37 the chain carries O-(pantetheine 4'-phosphoryl)serine.

Belongs to the acyl carrier protein (ACP) family. Post-translationally, 4'-phosphopantetheine is transferred from CoA to a specific serine of apo-ACP by AcpS. This modification is essential for activity because fatty acids are bound in thioester linkage to the sulfhydryl of the prosthetic group.

Its subcellular location is the cytoplasm. It participates in lipid metabolism; fatty acid biosynthesis. Carrier of the growing fatty acid chain in fatty acid biosynthesis. The protein is Acyl carrier protein of Rhodopseudomonas palustris (strain BisA53).